Consider the following 695-residue polypeptide: MQLSVLIASVLAAGAAVDAASYTPQNVSCPDNANFIRNAADGLSPAEKEWLKKRDPITRDALQTFLRRAFANVSTEITSALFNDTENVPKLGIAVAGGGYRAMFVGAGAFAAMDNRTDGANEHGLGGLLQAATYMAGLSGGNWLTGTLAYNNFTSVQQILEEGDKADAIWNITNSFLNPYDKDFSKTLARWTAIGSQVQGKRDAGFNVTITDLWSRALAYGWFPTLPNAGAGLTWSSLRDNEIFMNGEMPMPISVADGRYPGTTVINLNATVFEMTPFEIGSWDPSLNAFSDIKYLGTQVTDGKPETERCINGFDDASFIMGTSSSLFNEFTMSNDSAVAYTYLNTLSSTLVKGIDKENNDIAMYAPNPFKGSKYVDSNYTTSIVDSDSLFLVDGGEDLQGIPFVPLLKQERDLDIIFAIDVDTETSDNYPAGGPMMKTYERQFSKQGKGMAFPYVPDMTTFVNLGLGGKPSFYGCDANNLTDLEYIPPLIVYIPNSYHSFESNVSTFKLNYNYSERVGMIRNAFEATTRNNLTEDADYVTCVGCAIIRRKQQSLNLTLPDICDKCFTNYCWNGTIDNTPTKLLTPNNQDPAAISSAIAAVTDDSPIGALLNTGSGTKSNSSSKTNSTLVTSSRATSTGTLISNSSSNSTVSSTAARSSTSSTAKKNAGSVLKLEFSKSASVMVAIAAAAVASLI.

The N-terminal stretch at 1–19 (MQLSVLIASVLAAGAAVDA) is a signal peptide. N-linked (GlcNAc...) asparagine glycans are attached at residues asparagine 26, asparagine 72, asparagine 83, asparagine 115, asparagine 152, asparagine 171, asparagine 207, asparagine 269, asparagine 335, asparagine 379, asparagine 480, asparagine 504, asparagine 513, asparagine 532, asparagine 556, asparagine 573, asparagine 620, asparagine 626, asparagine 644, and asparagine 648. In terms of domain architecture, PLA2c spans 28–577 (SCPDNANFIR…TNYCWNGTID (550 aa)). Residues 612–662 (NTGSGTKSNSSSKTNSTLVTSSRATSTGTLISNSSSNSTVSSTAARSSTSS) form a disordered region.

It belongs to the lysophospholipase family.

Its subcellular location is the secreted. The protein localises to the cell wall. The enzyme catalyses a 1-acyl-sn-glycero-3-phosphocholine + H2O = sn-glycerol 3-phosphocholine + a fatty acid + H(+). Its function is as follows. Catalyzes the release of fatty acids from lysophospholipids. Phospholipase B may well contribute to pathogenicity by abetting the fungus in damaging and traversing host cell membranes, processes which likely increase the rapidity of disseminated infection. The polypeptide is Lysophospholipase 2 (Candida glabrata (strain ATCC 2001 / BCRC 20586 / JCM 3761 / NBRC 0622 / NRRL Y-65 / CBS 138) (Yeast)).